An 811-amino-acid chain; its full sequence is Leucine--tRNA ligase (811 aa).

Positions Ser-38–His-49 match the 'HIGH' region motif. The 'KMSKS' region signature appears at Lys-570 to Ser-574. Lys-573 is a binding site for ATP.

It belongs to the class-I aminoacyl-tRNA synthetase family.

Its subcellular location is the cytoplasm. It catalyses the reaction tRNA(Leu) + L-leucine + ATP = L-leucyl-tRNA(Leu) + AMP + diphosphate. This chain is Leucine--tRNA ligase, found in Clostridium kluyveri (strain ATCC 8527 / DSM 555 / NBRC 12016 / NCIMB 10680 / K1).